Reading from the N-terminus, the 125-residue chain is Large ribosomal subunit protein uL18 (125 aa).

G2 carries the post-translational modification N-acetylglycine. An N6-acetyllysine mark is found at K5 and K48.

The protein belongs to the universal ribosomal protein uL18 family. As to quaternary structure, component of the large ribosomal subunit (LSU). Part of the 5S RNP complex, which is a LSU subcomplex composed of the 5S RNA, RPL5 and RPL11. Component of a hexameric 5S RNP precursor complex, composed of 5S RNA, RRS1, RPF2/BXDC1, RPL5, RPL11 and HEATR3; this complex acts as a precursor for ribosome assembly. Interacts with NVL in an ATP-dependent manner. Interacts with RRP1B. Interacts with IPO5, IPO7 and KPNB1; these interactions may be involved in RPL5 nuclear import for the assembly of ribosomal subunits. Interacts with RRP1B.

Its subcellular location is the cytoplasm. The protein localises to the nucleus. It localises to the nucleolus. Component of the ribosome, a large ribonucleoprotein complex responsible for the synthesis of proteins in the cell. The small ribosomal subunit (SSU) binds messenger RNAs (mRNAs) and translates the encoded message by selecting cognate aminoacyl-transfer RNA (tRNA) molecules. The large subunit (LSU) contains the ribosomal catalytic site termed the peptidyl transferase center (PTC), which catalyzes the formation of peptide bonds, thereby polymerizing the amino acids delivered by tRNAs into a polypeptide chain. The nascent polypeptides leave the ribosome through a tunnel in the LSU and interact with protein factors that function in enzymatic processing, targeting, and the membrane insertion of nascent chains at the exit of the ribosomal tunnel. As part of the 5S RNP/5S ribonucleoprotein particle it is an essential component of the LSU, required for its formation and the maturation of rRNAs. It also couples ribosome biogenesis to p53/TP53 activation. As part of the 5S RNP it accumulates in the nucleoplasm and inhibits MDM2, when ribosome biogenesis is perturbed, mediating the stabilization and the activation of TP53. This chain is Large ribosomal subunit protein uL18 (RPL5), found in Sus scrofa (Pig).